The primary structure comprises 124 residues: RNA polymerase-binding protein RbpA (124 aa).

Positions 34, 38, 56, and 59 each coordinate Zn(2+). The segment at glutamate 73 to alanine 124 is sufficient for interaction with HrdB (SigA).

The protein belongs to the RNA polymerase-binding protein RbpA family. As to quaternary structure, homodimer. Forms a complex with the RNAP, and a complex with RNAP plus principal sigma factor HrdB associated with promoter. Binds to free principal sigma factors HrdB and HrdA, probably via the sigma-2 domain, but not to 6 other sigma factors tested. Zn(2+) serves as cofactor.

Its function is as follows. Binds to RNA polymerase (RNAP), stimulating transcription from principal, but not alternative sigma factor promoters. Stimulates transcription from several principal sigma factor HrdB (SigA)-dependent promoters but not from a SigR-dependent promoter. Stimulation occurs in the presence of the transcription initiation inhibitor rifampicin (Rif). In Streptomyces coelicolor (strain ATCC BAA-471 / A3(2) / M145), this protein is RNA polymerase-binding protein RbpA.